A 77-amino-acid chain; its full sequence is U8-lycotoxin-Ls1r (77 aa).

Residues 1–20 (MKLIIFTGLVLFAIVSLIEA) form the signal peptide. Residues 21–26 (QAENEK) constitute a propeptide that is removed on maturation.

Belongs to the neurotoxin 19 (CSTX) family. 08 (U8-Lctx) subfamily. Contains 4 disulfide bonds. In terms of tissue distribution, expressed by the venom gland.

It localises to the secreted. This Lycosa singoriensis (Wolf spider) protein is U8-lycotoxin-Ls1r.